The primary structure comprises 257 residues: (R)-2-haloacid dehalogenase (257 aa).

This sequence belongs to the HAD-like hydrolase superfamily. S-2-haloalkanoic acid dehalogenase family.

The enzyme catalyses an (R)-2-haloacid + H2O = a (2S)-2-hydroxycarboxylate + a halide anion + H(+). Catalyzes the hydrolytic dehalogenation of small (R)-2-haloalkanoic acids to yield the corresponding (S)-2-hydroxyalkanoic acids. Acts on acids of short chain lengths, C(2) to C(4), with inversion of configuration at C-2. This chain is (R)-2-haloacid dehalogenase (dehI), found in Rhizobium sp. (strain NHG3).